A 352-amino-acid chain; its full sequence is MFDLNQSLFLRALRRQPVERTPIWIMRQAGRYLPEYRKVREHAGDFLNLCKNPELACEVTLQPLRRYALDAAILFSDILTIPDAMGLGLYFAEGEGPCFTNPLQDTKAIHTLKIPSIPESLSYVFDAARLIRQEMPKELPLIGFSGSPWTLACYMVEGGSSRDFKRILNLIYTEKEAAHLLLNKLAVSVTAYLIEQIKAGVNAVMIFDTWGGVLTPQNYKDFSLAYMHQIVQQLKKEYPDIPVILFTKNGGQWLEWMAETGCDALGVDWTCDLASARKRVGGKVALQGNLDPAVLLTTKNCIRREVGSVLASYGYGTGHIFNLGHGITPDVPPENVAIMIEAVHEISPQYHL.

Residues 27–31, aspartate 77, tyrosine 154, threonine 209, and histidine 325 contribute to the substrate site; that span reads RQAGR.

Belongs to the uroporphyrinogen decarboxylase family. Homodimer.

Its subcellular location is the cytoplasm. It carries out the reaction uroporphyrinogen III + 4 H(+) = coproporphyrinogen III + 4 CO2. Its pathway is porphyrin-containing compound metabolism; protoporphyrin-IX biosynthesis; coproporphyrinogen-III from 5-aminolevulinate: step 4/4. Functionally, catalyzes the decarboxylation of four acetate groups of uroporphyrinogen-III to yield coproporphyrinogen-III. This Legionella pneumophila (strain Corby) protein is Uroporphyrinogen decarboxylase.